The following is a 1481-amino-acid chain: Cystic fibrosis transmembrane conductance regulator (1481 aa).

Residues 1–77 (MQRSPLEKAS…KLINALRRCF (77 aa)) are Cytoplasmic-facing. A helical transmembrane segment spans residues 78–98 (FWRFTFYGILLYLGEVTKAVQ). In terms of domain architecture, ABC transmembrane type-1 1 spans 81–365 (FTFYGILLYL…WAVQTWYDSL (285 aa)). Topologically, residues 99-122 (PLLLGRIIASYDPDNKTERSIAIY) are extracellular. A helical transmembrane segment spans residues 123 to 146 (LGIGLCLLFIVRTLLLHPAIFGLH). Residues 147 to 195 (HIGMQMRIAMFSLIYKKTLKLSSRVLDKISIGQLVSLLSNNLNKFDEGL) lie on the Cytoplasmic side of the membrane. The chain crosses the membrane as a helical span at residues 196–216 (ALAHFVWIAPLQVALLMGLIW). Residues 217 to 222 (ELLQAS) lie on the Extracellular side of the membrane. A helical transmembrane segment spans residues 223-243 (AFCGLGFLIVLALFQAGLGRM). Over 244-298 (MMKYRDQRAGKINERLVITSEMIENIQSVKAYCWEEAMEKMIENLRQTELKLTRK) the chain is Cytoplasmic. Residues 299 to 319 (AAYVRYFNSSAFFFSGFFVVF) form a helical membrane-spanning segment. Residues 320–339 (LSVLPYALIKGIALRKIFTT) lie on the Extracellular side of the membrane. Residues 340–358 (ISFCIVLRMAVTRQFPWAV) form a helical membrane-spanning segment. Over 359–858 (QTWYDSLGAI…YLRYITLHKS (500 aa)) the chain is Cytoplasmic. Residues W401, S434, 458-465 (GSTGAGKT), and Q493 each bind ATP. Positions 423 to 646 (NGDDNLFFSN…RPDFSSKLMG (224 aa)) constitute an ABC transporter 1 domain. A lipid anchor (S-palmitoyl cysteine) is attached at C524. Residues S549 and S660 each carry the phosphoserine modification. The disordered R region stretch occupies residues 654–831 (SSERRNSILT…EEINEEDLKE (178 aa)). S670 is subject to Phosphoserine; by PKA. S686 carries the phosphoserine modification. Residue K688 forms a Glycyl lysine isopeptide (Lys-Gly) (interchain with G-Cter in ubiquitin) linkage. A phosphoserine mark is found at S700 and S712. T717 is subject to Phosphothreonine. Phosphoserine occurs at positions 737, 753, 768, 790, 795, and 813. Residues 859 to 879 (LIFVLIWCLVIFLAEVAASLV) traverse the membrane as a helical segment. The 297-residue stretch at 859 to 1155 (LIFVLIWCLV…AVNSSIDVDS (297 aa)) folds into the ABC transmembrane type-1 2 domain. Topologically, residues 880 to 918 (LLWLLGNTRFQDKGNSTYSRNNSYAVIITNTSSYYVFYI) are extracellular. N-linked (GlcNAc...) asparagine glycosylation is found at N894, N900, and N909. The chain crosses the membrane as a discontinuously helical span at residues 919 to 939 (YVGVADTLLALGFFRGLPLVH). Topologically, residues 940 to 990 (TLITVSKILHHKMLHSVLQAPMSTLNTLKAGGILNRFSKDIAILDDLLPLT) are cytoplasmic. The chain crosses the membrane as a helical span at residues 991 to 1011 (IFDFIQLLLIVIGAIAVVSVL). Over 1012 to 1013 (QP) the chain is Extracellular. A helical membrane pass occupies residues 1014–1034 (YIFLATVPVIAAFILLRAYFL). Residues 1035-1095 (QTSQQLKQLE…TASWFLYLST (61 aa)) lie on the Cytoplasmic side of the membrane. The chain crosses the membrane as a helical span at residues 1096–1116 (LRWFQMRIEMIFVIFFIAVTF). Topologically, residues 1117–1130 (ISILTTGEGEGTVG) are extracellular. A helical transmembrane segment spans residues 1131-1151 (IILTLAMNIMSTLQWAVNSSI). Topologically, residues 1152 to 1481 (DVDSLMRSVS…TEEEVQETRL (330 aa)) are cytoplasmic. The ABC transporter 2 domain maps to 1211 to 1444 (MTIKDLTAKY…KSLFRQAISH (234 aa)). ATP is bound by residues Y1220 and 1245–1252 (GRTGSGKS). Residues 1387–1481 (RALKQAFADC…TEEEVQETRL (95 aa)) form an interaction with GORASP2 region. Residue C1396 is the site of S-palmitoyl cysteine attachment. Phosphoserine is present on residues S1445 and S1457. The interval 1453-1481 (HRNSSKYKSRPQIASLKEETEEEVQETRL) is disordered. Over residues 1471-1481 (ETEEEVQETRL) the composition is skewed to acidic residues. The PDZ-binding motif lies at 1479–1481 (TRL).

It belongs to the ABC transporter superfamily. ABCC family. CFTR transporter (TC 3.A.1.202) subfamily. Monomer; does not require oligomerization for channel activity. May form oligomers in the membrane. Interacts with SLC26A3, SLC26A6 and NHERF1. Interacts with SHANK2. Interacts with MYO6. Interacts (via C-terminus) with GOPC (via PDZ domain); this promotes CFTR internalization and thereby decreases channel activity. Interacts with SLC4A7 through NHERF1. Found in a complex with MYO5B and RAB11A. Interacts with ANO1. Interacts with SLC26A8. Interacts with AHCYL1; the interaction increases CFTR activity. Interacts with CSE1L. The core-glycosylated form interacts with GORASP2 (via PDZ GRASP-type 1 domain) in respone to ER stress. Interacts with MARCHF2; the interaction leads to CFTR ubiqtuitination and degradation. Interacts with ADGRG2. In terms of processing, N-glycosylated. Phosphorylated; cAMP treatment promotes phosphorylation and activates the channel. Dephosphorylation decreases the ATPase activity (in vitro). Phosphorylation at PKA sites activates the channel. Phosphorylation at PKC sites enhances the response to phosphorylation by PKA. Phosphorylated by AMPK; this inhibits channel activity. Post-translationally, ubiquitinated, leading to its degradation in the lysosome. Deubiquitination by USP10 in early endosomes enhances its endocytic recycling to the cell membrane. Ubiquitinated by RNF185 during ER stress. Ubiquitinated by MARCHF2.

The protein resides in the apical cell membrane. It is found in the early endosome membrane. The protein localises to the cell membrane. It localises to the recycling endosome membrane. Its subcellular location is the endoplasmic reticulum membrane. The protein resides in the nucleus. It catalyses the reaction ATP + H2O + closed Cl(-) channel = ADP + phosphate + open Cl(-) channel.. The catalysed reaction is chloride(in) = chloride(out). It carries out the reaction hydrogencarbonate(in) = hydrogencarbonate(out). The enzyme catalyses ATP + H2O = ADP + phosphate + H(+). Functionally, epithelial ion channel that plays an important role in the regulation of epithelial ion and water transport and fluid homeostasis. Mediates the transport of chloride ions across the cell membrane. Possesses an intrinsic ATPase activity and utilizes ATP to gate its channel; the passive flow of anions through the channel is gated by cycles of ATP binding and hydrolysis by the ATP-binding domains. The ion channel is also permeable to HCO(3)(-); selectivity depends on the extracellular chloride concentration. Exerts its function also by modulating the activity of other ion channels and transporters. Contributes to the regulation of the pH and the ion content of the epithelial fluid layer. Modulates the activity of the epithelial sodium channel (ENaC) complex, in part by regulating the cell surface expression of the ENaC complex. May regulate bicarbonate secretion and salvage in epithelial cells by regulating the transporter SLC4A7. Can inhibit the chloride channel activity of ANO1. Plays a role in the chloride and bicarbonate homeostasis during sperm epididymal maturation and capacitation. In Saimiri boliviensis boliviensis (Bolivian squirrel monkey), this protein is Cystic fibrosis transmembrane conductance regulator.